A 310-amino-acid polypeptide reads, in one-letter code: Manganese ABC transporter substrate-binding lipoprotein PsaA (310 aa).

Residues 1-20 (MKKIASVLALFVALLFGLLA) form the signal peptide. Residue cysteine 21 is the site of N-palmitoyl cysteine attachment. A lipid anchor (S-diacylglycerol cysteine) is attached at cysteine 21. Histidine 68, histidine 140, glutamate 206, and aspartate 281 together coordinate Mn(2+).

The protein belongs to the bacterial solute-binding protein 9 family. Lipoprotein receptor antigen (Lrai) subfamily.

It is found in the cell membrane. Functionally, part of the ATP-binding cassette (ABC) transport system PsaABC involved in manganese import. Binds manganese with high affinity and specificity and delivers it to the membrane permease for translocation into the cytoplasm. Also acts as an adhesin which is involved on adherence to extracellular matrix. The chain is Manganese ABC transporter substrate-binding lipoprotein PsaA from Streptococcus pneumoniae.